We begin with the raw amino-acid sequence, 214 residues long: UPF0301 protein blr1492 (214 aa).

The segment at 1–22 is disordered; sequence MAPTGKRTGESTRSTGPAPPSS.

The protein belongs to the UPF0301 (AlgH) family.

The chain is UPF0301 protein blr1492 from Bradyrhizobium diazoefficiens (strain JCM 10833 / BCRC 13528 / IAM 13628 / NBRC 14792 / USDA 110).